The following is a 195-amino-acid chain: MRVAEVVRNTSETQIRVKLDLDGTGRQKLATGVPFLDHMLDQIARHGLIDLEVEAHGDTHIDDHHTVEDVGITLGQAVAKAIGDKKGIRRYGHSYVPLDEALSRVVIDFSGRPGLEFHVPFTRARIGTFDVDLSIEFFRGFVNHAGVTLHIDNLRGINAHHQLETVFKAFGRALRAAVELDERAAGQIPSTKGSL.

Belongs to the imidazoleglycerol-phosphate dehydratase family.

The protein resides in the cytoplasm. The enzyme catalyses D-erythro-1-(imidazol-4-yl)glycerol 3-phosphate = 3-(imidazol-4-yl)-2-oxopropyl phosphate + H2O. It functions in the pathway amino-acid biosynthesis; L-histidine biosynthesis; L-histidine from 5-phospho-alpha-D-ribose 1-diphosphate: step 6/9. The protein is Imidazoleglycerol-phosphate dehydratase of Burkholderia ambifaria (strain MC40-6).